The following is a 223-amino-acid chain: DNA mismatch repair protein MutH (223 aa).

It belongs to the MutH family.

The protein localises to the cytoplasm. In terms of biological role, sequence-specific endonuclease that cleaves unmethylated GATC sequences. It is involved in DNA mismatch repair. This chain is DNA mismatch repair protein MutH, found in Shewanella sp. (strain MR-7).